Consider the following 140-residue polypeptide: Nuclear receptor 2C2-associated protein (140 aa).

Belongs to the NR2C2AP family. Interacts with NR2C2/TR4.

Its subcellular location is the nucleus. In terms of biological role, may act as a repressor of NR2C2-mediated transactivation by suppressing the binding between NR2C2/TR4 and the TR4-response element in target genes. The protein is Nuclear receptor 2C2-associated protein (NR2C2AP) of Bos taurus (Bovine).